The primary structure comprises 226 residues: NADH-ubiquinone oxidoreductase 19.3 kDa subunit, mitochondrial (226 aa).

A disordered region spans residues 40 to 68 (ATGAVAPAGAQHGIARRERREVPLPSQEG). Residues C101, C102, C166, and C196 each contribute to the [4Fe-4S] cluster site.

The protein belongs to the complex I 20 kDa subunit family. In terms of assembly, complex I is composed of about 40 different subunits. This is a component of the iron-sulfur (IP) fragment of the enzyme. [4Fe-4S] cluster is required as a cofactor.

It localises to the mitochondrion. It carries out the reaction a ubiquinone + NADH + 5 H(+)(in) = a ubiquinol + NAD(+) + 4 H(+)(out). Core subunit of the mitochondrial membrane respiratory chain NADH dehydrogenase (Complex I) that is believed to belong to the minimal assembly required for catalysis. Complex I functions in the transfer of electrons from NADH to the respiratory chain. The immediate electron acceptor for the enzyme is believed to be ubiquinone. The sequence is that of NADH-ubiquinone oxidoreductase 19.3 kDa subunit, mitochondrial from Neurospora crassa (strain ATCC 24698 / 74-OR23-1A / CBS 708.71 / DSM 1257 / FGSC 987).